The primary structure comprises 594 residues: DNA ligase (594 aa).

Glu-256 provides a ligand contact to ATP. The active-site N6-AMP-lysine intermediate is Lys-258. ATP-binding residues include Arg-263, Arg-279, Glu-309, Phe-349, Arg-426, and Lys-432.

It belongs to the ATP-dependent DNA ligase family. The cofactor is Mg(2+).

The catalysed reaction is ATP + (deoxyribonucleotide)n-3'-hydroxyl + 5'-phospho-(deoxyribonucleotide)m = (deoxyribonucleotide)n+m + AMP + diphosphate.. Functionally, DNA ligase that seals nicks in double-stranded DNA during DNA replication, DNA recombination and DNA repair. The protein is DNA ligase of Ignicoccus hospitalis (strain KIN4/I / DSM 18386 / JCM 14125).